The sequence spans 571 residues: Gag-Pro polyprotein (571 aa).

Residue Gly2 is the site of N-myristoyl glycine; by host attachment. The PPXY motif signature appears at 100–103; it reads PPPY. Repeats lie at residues 342–362 and 367–387; these read PPGP…CPTK and PPGP…CPTL. 2 CCHC-type zinc fingers span residues 345 to 362 and 370 to 387; these read PCYR…CPTK and PCPI…CPTL. The Protease; shared with dimeric partner role is filled by Thr453.

In terms of assembly, homodimer; the homodimers are part of the immature particles. Interacts with human TSG101 and NEDD4; these interactions are essential for budding and release of viral particles. Homodimer; further assembles as homohexamers. Post-translationally, specific enzymatic cleavages by the viral protease yield mature proteins. The polyprotein is cleaved during and after budding, this process is termed maturation. The protease is autoproteolytically processed at its N- and C-termini. In terms of processing, myristoylated. Myristoylation of the matrix (MA) domain mediates the transport and binding of Gag polyproteins to the host plasma membrane and is required for the assembly of viral particles.

The protein localises to the virion. Its function is as follows. The matrix domain targets Gag, Gag-Pro and Gag-Pro-Pol polyproteins to the plasma membrane via a multipartite membrane binding signal, that includes its myristoylated N-terminus. Matrix protein. In terms of biological role, forms the spherical core of the virus that encapsulates the genomic RNA-nucleocapsid complex. Functionally, binds strongly to viral nucleic acids and promote their aggregation. Also destabilizes the nucleic acids duplexes via highly structured zinc-binding motifs. Its function is as follows. The aspartyl protease mediates proteolytic cleavages of Gag and Gag-Pol polyproteins during or shortly after the release of the virion from the plasma membrane. Cleavages take place as an ordered, step-wise cascade to yield mature proteins. This process is called maturation. Displays maximal activity during the budding process just prior to particle release from the cell. This Bovine leukemia virus (isolate Japanese BLV-1) (BLV) protein is Gag-Pro polyprotein.